Reading from the N-terminus, the 756-residue chain is 1-phosphatidylinositol 4,5-bisphosphate phosphodiesterase delta-1 (756 aa).

Residues 21–130 (ALLKGSQLLK…WVLGLHKIIH (110 aa)) form the PH domain. The substrate binding stretch occupies residues 30–57 (KVKSSSWRRERFYKLQEDCKTIWQESRK). 2 EF-hand domains span residues 140 to 175 (KLQH…LNIQ) and 176 to 211 (VDDS…LTQR). Positions 153, 155, 157, 159, 164, 189, 191, 193, 195, and 200 each coordinate Ca(2+). S191 carries O-linked (GlcNAc) serine glycosylation. An O-linked (GlcNAc) threonine glycan is attached at T193. The 145-residue stretch at 296-440 (QDMGQPLSHY…LKGKILLKGK (145 aa)) folds into the PI-PLC X-box domain. H311 is an active-site residue. 3 residues coordinate Ca(2+): N312, E341, and D343. The active site involves H356. E390 lines the Ca(2+) pocket. 2 residues coordinate substrate: K438 and K440. The residue at position 457 (T457) is a Phosphothreonine. The residue at position 460 (S460) is a Phosphoserine. One can recognise a PI-PLC Y-box domain in the interval 492–609 (LSDMVIYCKS…GYVLKPAFLR (118 aa)). Positions 522 and 549 each coordinate substrate. The region spanning 611 to 737 (PNGTFNPRAL…QGYRHVHLMS (127 aa)) is the C2 domain. Ca(2+) is bound by residues I651, D653, N677, D706, Y707, and D708.

In terms of assembly, interacts with TGM2. The cofactor is Ca(2+). In terms of tissue distribution, strongly expressed in lung, liver and heart. Also expressed at least in pancreas, kidney, skeletal muscle, placenta and brain.

The enzyme catalyses a 1,2-diacyl-sn-glycero-3-phospho-(1D-myo-inositol-4,5-bisphosphate) + H2O = 1D-myo-inositol 1,4,5-trisphosphate + a 1,2-diacyl-sn-glycerol + H(+). The catalysed reaction is a 1,2-diacyl-sn-glycero-3-phospho-(1D-myo-inositol) + H2O = 1D-myo-inositol 1-phosphate + a 1,2-diacyl-sn-glycerol + H(+). Its function is as follows. The production of the second messenger molecules diacylglycerol (DAG) and inositol 1,4,5-trisphosphate (IP3) is mediated by activated phosphatidylinositol-specific phospholipase C enzymes. Essential for trophoblast and placental development. Binds phosphatidylinositol 4,5-bisphosphate. The polypeptide is 1-phosphatidylinositol 4,5-bisphosphate phosphodiesterase delta-1 (Homo sapiens (Human)).